Here is a 403-residue protein sequence, read N- to C-terminus: Phosphopentomutase (403 aa).

6 residues coordinate Mn(2+): D13, D298, H303, D339, H340, and H351.

The protein belongs to the phosphopentomutase family. Requires Mn(2+) as cofactor.

The protein localises to the cytoplasm. The catalysed reaction is 2-deoxy-alpha-D-ribose 1-phosphate = 2-deoxy-D-ribose 5-phosphate. It carries out the reaction alpha-D-ribose 1-phosphate = D-ribose 5-phosphate. The protein operates within carbohydrate degradation; 2-deoxy-D-ribose 1-phosphate degradation; D-glyceraldehyde 3-phosphate and acetaldehyde from 2-deoxy-alpha-D-ribose 1-phosphate: step 1/2. Isomerase that catalyzes the conversion of deoxy-ribose 1-phosphate (dRib-1-P) and ribose 1-phosphate (Rib-1-P) to deoxy-ribose 5-phosphate (dRib-5-P) and ribose 5-phosphate (Rib-5-P), respectively. The protein is Phosphopentomutase of Streptococcus pneumoniae (strain JJA).